The following is a 1412-amino-acid chain: Protein MODIFIER OF SNC1 1 (1412 aa).

6 disordered regions span residues 1-276 (MTSS…QSYP), 384-437 (GYGS…TQRP), 472-798 (QQMQ…KQKQ), 827-888 (NEGV…DESI), 909-1144 (DIKV…WNDG), and 1156-1412 (AEEM…GDRN). A compositionally biased stretch (polar residues) spans 56-103 (SWGSKSSLNAWGTSSLSPRTESGPGSPSHLSNRPSSGGSVTRPSTADS). At S72 the chain carries Phosphoserine. Over residues 109-119 (SSSSVAWDSNS) the composition is skewed to low complexity. Positions 120–135 (RPSSASGVFPSNQPSV) are enriched in polar residues. 2 stretches are compositionally biased toward basic and acidic residues: residues 197 to 207 (AEKDTSEKSTR) and 236 to 267 (ANDR…EGQL). Residues 478–488 (RNERREIRNDA) show a composition bias toward basic and acidic residues. 4 stretches are compositionally biased toward polar residues: residues 517–531 (KTRT…SSVV), 539–553 (QPRT…NKVS), 565–581 (SKNS…TNKN), and 610–639 (RIVN…TNTE). Basic and acidic residues predominate over residues 665-713 (DPKDNQRSTMRELARQRAQQRQKEEEERARDQRAKALAKLEELNRRSQI). Positions 667-717 (KDNQRSTMRELARQRAQQRQKEEEERARDQRAKALAKLEELNRRSQIYEEG) form a coiled coil. 3 stretches are compositionally biased toward polar residues: residues 738 to 749 (GSHSSNATNSVE), 756 to 779 (KNTT…QQDN), and 829 to 847 (GVSS…SAES). A compositionally biased stretch (basic residues) spans 850 to 862 (PKRKNNRNGKKKH). Over residues 877–888 (VGKETKSGDESI) the composition is skewed to basic and acidic residues. S883 bears the Phosphoserine mark. Polar residues-rich tracts occupy residues 914-938 (GDSS…NWKS) and 983-1003 (QTTV…QTSS). A compositionally biased stretch (basic and acidic residues) spans 1006–1023 (KRVEIERYVPKPIVKEMA). Polar residues predominate over residues 1056–1070 (LQPSGSTAGKSGSPS). Residues 1071-1084 (KSRHGNGRQGKHGR) are compositionally biased toward basic residues. Positions 1106 to 1137 (FVTSNQPIRGTVNYHSSKQTEQIAAKDQTTCN) are enriched in polar residues. Basic and acidic residues-rich tracts occupy residues 1191 to 1202 (DPKKGNKRDFNK), 1222 to 1232 (KEGRVPGDHVW), and 1242 to 1251 (GGRESTRDKP). Composition is skewed to polar residues over residues 1266 to 1286 (GFTT…QNRS) and 1293 to 1307 (VEQN…NTGQ). Basic and acidic residues-rich tracts occupy residues 1338-1351 (SNRD…HYEY) and 1359-1369 (YDGERSREQSK). Residues 1384-1397 (QGQQRQGGYQQQRG) show a composition bias toward low complexity. Positions 1400–1412 (GRNGGHGFTGDRN) are enriched in gly residues.

Interacts with TCP14 and TCP15.

Its function is as follows. Involved in the regulation of the chromatin structure and DNA methylation at the SNC1 locus. Regulates the expression of SNC1 at chromatin level. This is Protein MODIFIER OF SNC1 1 (MOS1) from Arabidopsis thaliana (Mouse-ear cress).